Reading from the N-terminus, the 359-residue chain is Ribosomal RNA large subunit methyltransferase M (359 aa).

S-adenosyl-L-methionine is bound by residues Ser186, 219–222, Asp238, Asp258, and Asp275; that span reads CPGG. Catalysis depends on Lys304, which acts as the Proton acceptor.

This sequence belongs to the class I-like SAM-binding methyltransferase superfamily. RNA methyltransferase RlmE family. RlmM subfamily. Monomer.

The protein resides in the cytoplasm. The catalysed reaction is cytidine(2498) in 23S rRNA + S-adenosyl-L-methionine = 2'-O-methylcytidine(2498) in 23S rRNA + S-adenosyl-L-homocysteine + H(+). Functionally, catalyzes the 2'-O-methylation at nucleotide C2498 in 23S rRNA. This chain is Ribosomal RNA large subunit methyltransferase M, found in Aliivibrio fischeri (strain MJ11) (Vibrio fischeri).